Consider the following 432-residue polypeptide: UDP-N-acetylmuramate--L-alanine ligase (432 aa).

ATP is bound at residue 109–115 (GAHGKST).

It belongs to the MurCDEF family.

It is found in the cytoplasm. It catalyses the reaction UDP-N-acetyl-alpha-D-muramate + L-alanine + ATP = UDP-N-acetyl-alpha-D-muramoyl-L-alanine + ADP + phosphate + H(+). The protein operates within cell wall biogenesis; peptidoglycan biosynthesis. Functionally, cell wall formation. The protein is UDP-N-acetylmuramate--L-alanine ligase of Campylobacter jejuni subsp. jejuni serotype O:2 (strain ATCC 700819 / NCTC 11168).